We begin with the raw amino-acid sequence, 294 residues long: tRNA-cytidine(32) 2-sulfurtransferase (294 aa).

The PP-loop motif motif lies at S58–S63. C133, C136, and C224 together coordinate [4Fe-4S] cluster.

The protein belongs to the TtcA family. Homodimer. Mg(2+) serves as cofactor. [4Fe-4S] cluster is required as a cofactor.

It localises to the cytoplasm. The catalysed reaction is cytidine(32) in tRNA + S-sulfanyl-L-cysteinyl-[cysteine desulfurase] + AH2 + ATP = 2-thiocytidine(32) in tRNA + L-cysteinyl-[cysteine desulfurase] + A + AMP + diphosphate + H(+). Its pathway is tRNA modification. Its function is as follows. Catalyzes the ATP-dependent 2-thiolation of cytidine in position 32 of tRNA, to form 2-thiocytidine (s(2)C32). The sulfur atoms are provided by the cysteine/cysteine desulfurase (IscS) system. In Ruegeria pomeroyi (strain ATCC 700808 / DSM 15171 / DSS-3) (Silicibacter pomeroyi), this protein is tRNA-cytidine(32) 2-sulfurtransferase.